The sequence spans 780 residues: Replication origin-binding protein (780 aa).

The 157-residue stretch at 39 to 195 (SFENVRQPIK…AAFKPDTQIA (157 aa)) folds into the Helicase ATP-binding domain. 52–59 (AAMGSGKT) contributes to the ATP binding site.

Belongs to the herpesviridae OriBP family.

Functionally, probably involved in DNA replication. Binds the origin of replication (ori). The polypeptide is Replication origin-binding protein (U73) (Homo sapiens (Human)).